Consider the following 457-residue polypeptide: Fibrinogen C domain-containing protein 1-B (457 aa).

The segment at 1-21 is disordered; that stretch reads MGSDRWKNIRGTPQMEDSVQE. Topologically, residues 1–33 are cytoplasmic; that stretch reads MGSDRWKNIRGTPQMEDSVQEKSQRKGCGYILC. A helical; Signal-anchor for type II membrane protein membrane pass occupies residues 34–54; that stretch reads TVLLSVAVLLAVTVTGAVLFM. The Extracellular segment spans residues 55–457; that stretch reads NQYHAPSTEP…MKIRPQREEN (403 aa). Positions 231–454 constitute a Fibrinogen C-terminal domain; sequence CANGSKPRDC…FTEMKIRPQR (224 aa). Asn-233 carries N-linked (GlcNAc...) asparagine glycosylation. Residues Cys-240 and Cys-269 are joined by a disulfide bond. N-linked (GlcNAc...) asparagine glycosylation is present at Asn-336. Asp-389 and Asp-391 together coordinate Ca(2+). A disulfide bridge connects residues Cys-397 and Cys-410.

Homotetramer; disulfide-linked.

It localises to the membrane. In terms of biological role, acetyl group-binding receptor which shows a calcium-dependent binding to acetylated structures such as chitin, some N-acetylated carbohydrates, and amino acids. The protein is Fibrinogen C domain-containing protein 1-B (fibcd1-b) of Xenopus laevis (African clawed frog).